The chain runs to 138 residues: MKKVLALIVAATMGLSSVAFAADAVAPAAAAPAATTTAAPAAAATKAPAKATHHKKAHKKAPAQKAQAAKKHHKATKKAPAQKAQAAKKHHKATKAAPAQKAQAAKKHHKATKPAAAQKAQAAKKHHKATKKAAPAAK.

Positions 1 to 21 (MKKVLALIVAATMGLSSVAFA) are cleaved as a signal peptide. The propeptide occupies 22–85 (ADAVAPAAAA…TKKAPAQKAQ (64 aa)). Over residues 31 to 50 (APAATTTAAPAAAATKAPAK) the composition is skewed to low complexity. Positions 31 to 138 (APAATTTAAP…ATKKAAPAAK (108 aa)) are disordered. 2 stretches are compositionally biased toward basic residues: residues 51–77 (ATHHKKAHKKAPAQKAQAAKKHHKATK) and 122–131 (AAKKHHKATK).

It belongs to the Asr family. Post-translationally, proteolytic processing gives rise to the active protein.

It localises to the periplasm. Functionally, required for growth and/or survival at acidic conditions. In Serratia proteamaculans (strain 568), this protein is Acid shock protein.